The chain runs to 432 residues: Glyceraldehyde-3-phosphate dehydrogenase, testis-specific (432 aa).

The tract at residues 1–97 (MSRRDVVLTN…PPPPPPPKPA (97 aa)) is testis-specific N-terminal extension. The segment at 40 to 101 (PPPPKVEEPP…PPPKPAKELT (62 aa)) is disordered. Residues 44-55 (KVEEPPPPKEEP) are compositionally biased toward basic and acidic residues. Pro residues-rich tracts occupy residues 56–67 (PPPPPPPPPPQI) and 75–95 (APPP…PPPK). Residues 109-110 (RI), D130, K175, Y197, and T217 each bind NAD(+). D-glyceraldehyde 3-phosphate is bound by residues 247–249 (SCT), T278, 307–308 (TG), and R330. C248 (nucleophile) is an active-site residue. Phosphoserine is present on S350. An NAD(+)-binding site is contributed by N412.

Belongs to the glyceraldehyde-3-phosphate dehydrogenase family. Homotetramer. Expressed in both head and flagellum of epididymal sperm.

It is found in the cytoplasm. The enzyme catalyses D-glyceraldehyde 3-phosphate + phosphate + NAD(+) = (2R)-3-phospho-glyceroyl phosphate + NADH + H(+). The protein operates within carbohydrate degradation; glycolysis; pyruvate from D-glyceraldehyde 3-phosphate: step 1/5. In terms of biological role, may play an important role in regulating the switch between different pathways for energy production during spermiogenesis and in the spermatozoon. Required for sperm motility and male fertility. This chain is Glyceraldehyde-3-phosphate dehydrogenase, testis-specific (Gapdhs), found in Rattus norvegicus (Rat).